Here is a 470-residue protein sequence, read N- to C-terminus: Neuraminidase (470 aa).

Residues 1–14 (MNPNQKIITIGSIS) lie on the Intravirion side of the membrane. Positions 11–32 (GSISLGLVVFNVLLHVVSIIVT) are involved in apical transport and lipid raft association. Residues 15-35 (LGLVVFNVLLHVVSIIVTVLV) traverse the membrane as a helical segment. The tract at residues 32-86 (TVLVLGRGGNNGICNETVVREYNETVRIEKVTQWHNTSVVEYVPYWNEGTYMNNT) is hypervariable stalk region. Over 36–470 (LGRGGNNGIC…AILPFDIDKM (435 aa)) the chain is Virion surface. Residues N46, N54, N67, and N84 are each glycosylated (N-linked (GlcNAc...) asparagine; by host). Residues 89 to 470 (ICDVKGFAPF…AILPFDIDKM (382 aa)) are head of neuraminidase. Cystine bridges form between C90-C417, C122-C127, C182-C229, C231-C236, C277-C290, C279-C288, C316-C335, and C421-C446. Residue R116 participates in substrate binding. N-linked (GlcNAc...) asparagine; by host glycosylation occurs at N144. D149 functions as the Proton donor/acceptor in the catalytic mechanism. Substrate is bound at residue R150. A substrate-binding site is contributed by 275–276 (EE). Substrate is bound at residue R291. Ca(2+) is bound at residue D292. Residue N293 is glycosylated (N-linked (GlcNAc...) asparagine; by host). Positions 296 and 322 each coordinate Ca(2+). Position 368 (R368) interacts with substrate. A glycan (N-linked (GlcNAc...) asparagine; by host) is linked at N398. Y402 functions as the Nucleophile in the catalytic mechanism.

The protein belongs to the glycosyl hydrolase 34 family. In terms of assembly, homotetramer. Ca(2+) is required as a cofactor. Post-translationally, N-glycosylated.

It is found in the virion membrane. The protein localises to the host apical cell membrane. The enzyme catalyses Hydrolysis of alpha-(2-&gt;3)-, alpha-(2-&gt;6)-, alpha-(2-&gt;8)- glycosidic linkages of terminal sialic acid residues in oligosaccharides, glycoproteins, glycolipids, colominic acid and synthetic substrates.. Its activity is regulated as follows. Inhibited by the neuraminidase inhibitors zanamivir (Relenza) and oseltamivir (Tamiflu). These drugs interfere with the release of progeny virus from infected cells and are effective against all influenza strains. Resistance to neuraminidase inhibitors is quite rare. Functionally, catalyzes the removal of terminal sialic acid residues from viral and cellular glycoconjugates. Cleaves off the terminal sialic acids on the glycosylated HA during virus budding to facilitate virus release. Additionally helps virus spread through the circulation by further removing sialic acids from the cell surface. These cleavages prevent self-aggregation and ensure the efficient spread of the progeny virus from cell to cell. Otherwise, infection would be limited to one round of replication. Described as a receptor-destroying enzyme because it cleaves a terminal sialic acid from the cellular receptors. May facilitate viral invasion of the upper airways by cleaving the sialic acid moieties on the mucin of the airway epithelial cells. Likely to plays a role in the budding process through its association with lipid rafts during intracellular transport. May additionally display a raft-association independent effect on budding. Plays a role in the determination of host range restriction on replication and virulence. Sialidase activity in late endosome/lysosome traffic seems to enhance virus replication. The polypeptide is Neuraminidase (Aves (Horse)).